The chain runs to 253 residues: Imidazole glycerol phosphate synthase subunit HisF (253 aa).

Active-site residues include Asp-11 and Asp-130.

The protein belongs to the HisA/HisF family. Heterodimer of HisH and HisF.

The protein resides in the cytoplasm. It carries out the reaction 5-[(5-phospho-1-deoxy-D-ribulos-1-ylimino)methylamino]-1-(5-phospho-beta-D-ribosyl)imidazole-4-carboxamide + L-glutamine = D-erythro-1-(imidazol-4-yl)glycerol 3-phosphate + 5-amino-1-(5-phospho-beta-D-ribosyl)imidazole-4-carboxamide + L-glutamate + H(+). It functions in the pathway amino-acid biosynthesis; L-histidine biosynthesis; L-histidine from 5-phospho-alpha-D-ribose 1-diphosphate: step 5/9. Functionally, IGPS catalyzes the conversion of PRFAR and glutamine to IGP, AICAR and glutamate. The HisF subunit catalyzes the cyclization activity that produces IGP and AICAR from PRFAR using the ammonia provided by the HisH subunit. This Gluconobacter oxydans (strain 621H) (Gluconobacter suboxydans) protein is Imidazole glycerol phosphate synthase subunit HisF.